Consider the following 233-residue polypeptide: Purine nucleoside phosphorylase DeoD-type (233 aa).

An a purine D-ribonucleoside-binding site is contributed by His-4. Phosphate is bound by residues Gly-20, Arg-24, Arg-43, and 87–90 (RVGS). Residues 178 to 180 (EME) and 202 to 203 (SD) each bind a purine D-ribonucleoside. The active-site Proton donor is Asp-203.

It belongs to the PNP/UDP phosphorylase family. In terms of assembly, homohexamer; trimer of homodimers.

It catalyses the reaction a purine D-ribonucleoside + phosphate = a purine nucleobase + alpha-D-ribose 1-phosphate. It carries out the reaction a purine 2'-deoxy-D-ribonucleoside + phosphate = a purine nucleobase + 2-deoxy-alpha-D-ribose 1-phosphate. Functionally, catalyzes the reversible phosphorolytic breakdown of the N-glycosidic bond in the beta-(deoxy)ribonucleoside molecules, with the formation of the corresponding free purine bases and pentose-1-phosphate. This is Purine nucleoside phosphorylase DeoD-type from Bacillus subtilis (strain 168).